Reading from the N-terminus, the 215-residue chain is Cytochrome b6 (215 aa).

A helical transmembrane segment spans residues 32-52; sequence IFYCLGGITFTCFLLQVASGF. Residue C35 coordinates heme c. Positions 86 and 100 each coordinate heme b. The next 3 helical transmembrane spans lie at 90 to 110, 116 to 136, and 186 to 206; these read ASMMVLTMILHVFRVYLTGGF, LTWVTGVILAVLTVSFGVTGY, and LHTFILPLLTAVFMLMHFLMI. The heme b site is built by H187 and H202.

The protein belongs to the cytochrome b family. PetB subfamily. As to quaternary structure, the 4 large subunits of the cytochrome b6-f complex are cytochrome b6, subunit IV (17 kDa polypeptide, PetD), cytochrome f and the Rieske protein, while the 4 small subunits are PetG, PetL, PetM and PetN. The complex functions as a dimer. Heme b is required as a cofactor. It depends on heme c as a cofactor.

Its subcellular location is the plastid. It localises to the chloroplast thylakoid membrane. Its function is as follows. Component of the cytochrome b6-f complex, which mediates electron transfer between photosystem II (PSII) and photosystem I (PSI), cyclic electron flow around PSI, and state transitions. In Coleochaete orbicularis (Charophycean green alga), this protein is Cytochrome b6.